The following is a 255-amino-acid chain: MACLGPSAQVPELPEKNCGYREVQYWDQRYQGAADSAPYEWFGDFSCFRDLLEPELRPLDRILVLGCGNSALSYEIFLGGFPDVTSVDYSSVVVAAMRARYAHVPTLRWETMDVRALGFPSGSFDVVLEKGTLDALLTGEQDPWTVSSEGVHTVDQVLNEVSRVLVPAGRFISLTSAAPHFRTRHYAQAHYGWSLRHATYGNGFQFHFYLMQKGKELSVAQLAVGAQILSPPRPPTPSCFLQDSDHEDFLSAIQL.

2 residues coordinate S-adenosyl-L-methionine: W26 and Y30. Y39 carries the phosphotyrosine modification. S-adenosyl-L-methionine contacts are provided by residues W41, G66, 88–89 (DY), 113–114 (DV), and K130. The Required for methyltransferase activity signature appears at 129–134 (EKGTLD).

This sequence belongs to the methyltransferase superfamily.

It catalyses the reaction L-lysyl-[protein] + S-adenosyl-L-methionine = N(6)-methyl-L-lysyl-[protein] + S-adenosyl-L-homocysteine + H(+). It carries out the reaction N(6)-methyl-L-lysyl-[protein] + S-adenosyl-L-methionine = N(6),N(6)-dimethyl-L-lysyl-[protein] + S-adenosyl-L-homocysteine + H(+). The enzyme catalyses N(6),N(6)-dimethyl-L-lysyl-[protein] + S-adenosyl-L-methionine = N(6),N(6),N(6)-trimethyl-L-lysyl-[protein] + S-adenosyl-L-homocysteine + H(+). Functionally, protein-lysine methyltransferase that efficiently catalyzes three successive methylations on 'Lys-36' in eukaryotic translation elongation factor 1 alpha (EEF1A1 or EEF1A2). In Bos taurus (Bovine), this protein is EEF1A lysine methyltransferase 4.